Reading from the N-terminus, the 185-residue chain is Ribonuclease M5 (185 aa).

The Toprim domain maps to 3-84; that stretch reads KEVIVVEGRD…KHARISQSEG (82 aa). Glutamate 9, aspartate 55, and aspartate 57 together coordinate Mg(2+).

Belongs to the ribonuclease M5 family. Mg(2+) serves as cofactor.

Its subcellular location is the cytoplasm. The catalysed reaction is Endonucleolytic cleavage of RNA, removing 21 and 42 nucleotides, respectively, from the 5'- and 3'-termini of a 5S-rRNA precursor.. In terms of biological role, required for correct processing of both the 5' and 3' ends of 5S rRNA precursor. Cleaves both sides of a double-stranded region yielding mature 5S rRNA in one step. The chain is Ribonuclease M5 from Clostridium acetobutylicum (strain ATCC 824 / DSM 792 / JCM 1419 / IAM 19013 / LMG 5710 / NBRC 13948 / NRRL B-527 / VKM B-1787 / 2291 / W).